The chain runs to 447 residues: N-succinylarginine dihydrolase (447 aa).

Residues alanine 19–serine 28, asparagine 110, and histidine 137–arginine 138 each bind substrate. Glutamate 174 is an active-site residue. Residue arginine 213 coordinates substrate. Histidine 249 is a catalytic residue. Substrate contacts are provided by aspartate 251 and asparagine 364. The active-site Nucleophile is the cysteine 370.

It belongs to the succinylarginine dihydrolase family. As to quaternary structure, homodimer.

The catalysed reaction is N(2)-succinyl-L-arginine + 2 H2O + 2 H(+) = N(2)-succinyl-L-ornithine + 2 NH4(+) + CO2. Its pathway is amino-acid degradation; L-arginine degradation via AST pathway; L-glutamate and succinate from L-arginine: step 2/5. Catalyzes the hydrolysis of N(2)-succinylarginine into N(2)-succinylornithine, ammonia and CO(2). This chain is N-succinylarginine dihydrolase, found in Yersinia pseudotuberculosis serotype O:1b (strain IP 31758).